Reading from the N-terminus, the 52-residue chain is Ovomucoid (52 aa).

The 51-residue stretch at 2 to 52 folds into the Kazal-like domain; that stretch reads VDCSDYPKPVCTLEEMPLCGSDNKTYGNKCNFCNAVVDSNGTLTLSHFGKC. 3 cysteine pairs are disulfide-bonded: cysteine 4–cysteine 34, cysteine 12–cysteine 31, and cysteine 20–cysteine 52. N-linked (GlcNAc...) asparagine glycosylation is present at asparagine 41.

The protein resides in the secreted. This chain is Ovomucoid, found in Scythrops novaehollandiae (Channel-billed cuckoo).